The following is a 735-amino-acid chain: Protein RETICULATA-RELATED 5, chloroplastic (735 aa).

The N-terminal 75 residues, 1–75 (MKPTTNGGLL…TRRAILVAPP (75 aa)), are a transit peptide targeting the chloroplast. A run of 2 helical transmembrane segments spans residues 519–539 (ASVVDFFTVWLPAPTLSFISY) and 582–602 (VIIGGLKLAGVGVVSSFAAVG). A compositionally biased stretch (polar residues) spans 714-726 (ASQSTVEYSTTEE). The interval 714–735 (ASQSTVEYSTTEEASMDDLKNQ) is disordered.

It belongs to the RETICULATA family.

The protein resides in the plastid. Its subcellular location is the chloroplast membrane. Its function is as follows. May play a role in leaf development. The polypeptide is Protein RETICULATA-RELATED 5, chloroplastic (Arabidopsis thaliana (Mouse-ear cress)).